Here is a 288-residue protein sequence, read N- to C-terminus: Fe-S cluster assembly protein dre2 (288 aa).

Residues Met1–Val127 are N-terminal SAM-like domain. Residues Pro128 to Asp177 form a linker region. Residues Cys185, Cys196, Cys199, and Cys201 each coordinate [2Fe-2S] cluster. The segment at Cys185 to Cys201 is fe-S binding site A. The [4Fe-4S] cluster site is built by Cys244, Cys247, Cys255, and Cys258. Short sequence motifs (cx2C motif) lie at residues Cys244–Cys247 and Cys255–Cys258. Residues Cys244–Cys258 form a fe-S binding site B region.

The protein belongs to the anamorsin family. As to quaternary structure, monomer. Interacts with tah18. Interacts with tim40. The cofactor is [2Fe-2S] cluster. Requires [4Fe-4S] cluster as cofactor.

The protein resides in the cytoplasm. It localises to the mitochondrion intermembrane space. Its function is as follows. Component of the cytosolic iron-sulfur (Fe-S) protein assembly (CIA) machinery required for the maturation of extramitochondrial Fe-S proteins. Part of an electron transfer chain functioning in an early step of cytosolic Fe-S biogenesis, facilitating the de novo assembly of a [4Fe-4S] cluster on the scaffold complex cfd1-nbp35. Electrons are transferred to dre2 from NADPH via the FAD- and FMN-containing protein tah18. Tah18-dre2 are also required for the assembly of the diferric tyrosyl radical cofactor of ribonucleotide reductase (RNR), probably by providing electrons for reduction during radical cofactor maturation in the catalytic small subunit suc22. The chain is Fe-S cluster assembly protein dre2 from Schizosaccharomyces pombe (strain 972 / ATCC 24843) (Fission yeast).